Reading from the N-terminus, the 313-residue chain is Ribosomal RNA small subunit methyltransferase H (313 aa).

S-adenosyl-L-methionine contacts are provided by residues 35-37, Asp55, Phe80, Asp102, and Gln109; that span reads GGH.

This sequence belongs to the methyltransferase superfamily. RsmH family.

It localises to the cytoplasm. It carries out the reaction cytidine(1402) in 16S rRNA + S-adenosyl-L-methionine = N(4)-methylcytidine(1402) in 16S rRNA + S-adenosyl-L-homocysteine + H(+). Its function is as follows. Specifically methylates the N4 position of cytidine in position 1402 (C1402) of 16S rRNA. This is Ribosomal RNA small subunit methyltransferase H from Shewanella sp. (strain MR-7).